The following is a 71-amino-acid chain: UPF0346 protein SZO_05010 (71 aa).

This sequence belongs to the UPF0346 family.

This chain is UPF0346 protein SZO_05010, found in Streptococcus equi subsp. zooepidemicus (strain H70).